The sequence spans 257 residues: 3-deoxy-manno-octulosonate cytidylyltransferase (257 aa).

Belongs to the KdsB family.

Its subcellular location is the cytoplasm. The enzyme catalyses 3-deoxy-alpha-D-manno-oct-2-ulosonate + CTP = CMP-3-deoxy-beta-D-manno-octulosonate + diphosphate. It participates in nucleotide-sugar biosynthesis; CMP-3-deoxy-D-manno-octulosonate biosynthesis; CMP-3-deoxy-D-manno-octulosonate from 3-deoxy-D-manno-octulosonate and CTP: step 1/1. It functions in the pathway bacterial outer membrane biogenesis; lipopolysaccharide biosynthesis. In terms of biological role, activates KDO (a required 8-carbon sugar) for incorporation into bacterial lipopolysaccharide in Gram-negative bacteria. This is 3-deoxy-manno-octulosonate cytidylyltransferase from Rhodospirillum centenum (strain ATCC 51521 / SW).